Consider the following 895-residue polypeptide: MPAIVEKVLRAGEGRVVKRLHRVAEQVNALESDFEAMNDEELRGETVRFRERLAAGETLDDLLPEAFAVVREAARRTLGQRHFDVQLMGGAALHQGNIAEMRTGEGKTLVATLPAYLNALSGKGVHVITVNDFLAEYQSELMGRVYRFLGLTSACILSRMRPDERREAYAADITYGTNNEFGFDYLRDNMAWSTAEMVQRGHNFAIVDEVDSILIDEARTPLIISGPSDSPTKWYGEFAKIARRLTVDVDYEVDEKKRTIGILEAGIEKVEDLLGIENLYESVNTPLIGFLNNAVKAKELFKRDKDYVVSPNDEVLIVDEHTGRILAGRRYNEGMHQAIEAKEGVPIQNENQTLATITLQNFFRMYDKLAGMTGTAMTEAAEFHQTYKLGVVPIPTNRPAVRVDQPDLVYKNEQAKFAAVVEDIAEHHAAGQPVLVGTTSVEKSEYLSTLLTKAGVEHTVLNAKQHEREASIVAMAGRKGAVTVATNMAGRGTDIILGGNAEFLAVQAMRDKGLDPDETPEDYEAAWPEVLEQAQASVKAEHDEVRDLGGLYVLGTERHESRRIDNQLRGRSGRQGDPGESRFYLSLTDDLMRLFNAALVESFLTRTGIPEDVPIESKMVSRAIQSAQGQVEGRNFEIRKNVLKYDDVLNRQREVIYAERRKVLEGEDLHLQIRHFIDDVVTAYVTEATARGFGEDWDLDELFEALRSLYPVSVTPEEVVEAAGGRGNLTVERLLEEMRADAQACYDAREQELGETVVRDLERRVVLSVLDRKWREHLYEMDYLQEGIGLRAMAQRDPLVEYQREGYQLFGAMTEAIKEESVGYLFSLQVQPAAQAGAAATPPGFGAPPVRQQLQYSAPTAEGDVEVHAGDAAATDADTGNRAQRRANQRQQREV.

ATP contacts are provided by residues Q86, G104–T108, and D494. 2 stretches are compositionally biased toward low complexity: residues A838–P849 and G870–R882. The interval A838–V895 is disordered.

This sequence belongs to the SecA family. As to quaternary structure, monomer and homodimer. Part of the essential Sec protein translocation apparatus which comprises SecA, SecYEG and auxiliary proteins SecDF. Other proteins may also be involved.

It localises to the cell membrane. Its subcellular location is the cytoplasm. It carries out the reaction ATP + H2O + cellular proteinSide 1 = ADP + phosphate + cellular proteinSide 2.. Part of the Sec protein translocase complex. Interacts with the SecYEG preprotein conducting channel. Has a central role in coupling the hydrolysis of ATP to the transfer of proteins into and across the cell membrane, serving as an ATP-driven molecular motor driving the stepwise translocation of polypeptide chains across the membrane. This chain is Protein translocase subunit SecA, found in Kineococcus radiotolerans (strain ATCC BAA-149 / DSM 14245 / SRS30216).